The sequence spans 315 residues: uncharacterized protein (315 aa).

Over Met1–Ser38 the chain is Cytoplasmic. The chain crosses the membrane as a helical span at residues Ile39 to Pro59. At His60–Ser101 the chain is on the lumenal side. Positions Ser95 to Lys302 constitute a TLC domain. The helical transmembrane segment at Val102–Leu122 threads the bilayer. Residues Asp123–Asp144 are Cytoplasmic-facing. Residues Thr145 to Met165 traverse the membrane as a helical segment. The Lumenal segment spans residues Tyr166–Pro170. A helical transmembrane segment spans residues Phe171–Ile190. The Cytoplasmic portion of the chain corresponds to Gln191–Ser225. A helical transmembrane segment spans residues Leu226 to Trp246. The Lumenal segment spans residues Gly247–Glu264. The helical transmembrane segment at Pro265–Leu285 threads the bilayer. Residues Asn286 to Gln315 are Cytoplasmic-facing.

The protein resides in the endoplasmic reticulum membrane. This is an uncharacterized protein from Saccharomyces cerevisiae (strain ATCC 204508 / S288c) (Baker's yeast).